We begin with the raw amino-acid sequence, 142 residues long: Large ribosomal subunit protein uL13 (142 aa).

It belongs to the universal ribosomal protein uL13 family. As to quaternary structure, part of the 50S ribosomal subunit.

Its function is as follows. This protein is one of the early assembly proteins of the 50S ribosomal subunit, although it is not seen to bind rRNA by itself. It is important during the early stages of 50S assembly. This is Large ribosomal subunit protein uL13 from Syntrophobacter fumaroxidans (strain DSM 10017 / MPOB).